The primary structure comprises 344 residues: Phosphate acyltransferase (344 aa).

It belongs to the PlsX family. Homodimer. Probably interacts with PlsY.

The protein localises to the cytoplasm. The enzyme catalyses a fatty acyl-[ACP] + phosphate = an acyl phosphate + holo-[ACP]. It participates in lipid metabolism; phospholipid metabolism. Functionally, catalyzes the reversible formation of acyl-phosphate (acyl-PO(4)) from acyl-[acyl-carrier-protein] (acyl-ACP). This enzyme utilizes acyl-ACP as fatty acyl donor, but not acyl-CoA. This chain is Phosphate acyltransferase, found in Acaryochloris marina (strain MBIC 11017).